The following is a 127-amino-acid chain: Small ribosomal subunit protein uS13 (127 aa).

A disordered region spans residues 92–127 (HRMGLPVRGQRTRTNARTRRGVRRTVAGKKKASAKK). Positions 101–127 (QRTRTNARTRRGVRRTVAGKKKASAKK) are enriched in basic residues.

It belongs to the universal ribosomal protein uS13 family. As to quaternary structure, part of the 30S ribosomal subunit. Forms a loose heterodimer with protein S19. Forms two bridges to the 50S subunit in the 70S ribosome.

Its function is as follows. Located at the top of the head of the 30S subunit, it contacts several helices of the 16S rRNA. In the 70S ribosome it contacts the 23S rRNA (bridge B1a) and protein L5 of the 50S subunit (bridge B1b), connecting the 2 subunits; these bridges are implicated in subunit movement. Contacts the tRNAs in the A and P-sites. This Trichodesmium erythraeum (strain IMS101) protein is Small ribosomal subunit protein uS13.